We begin with the raw amino-acid sequence, 59 residues long: Small ribosomal subunit protein bS21 (59 aa).

Positions 39-59 are disordered; that stretch reads ETPVEKYKRKQRLKNRTKRRR. Residues 45–59 are compositionally biased toward basic residues; sequence YKRKQRLKNRTKRRR.

It belongs to the bacterial ribosomal protein bS21 family.

This Prochlorococcus marinus (strain SARG / CCMP1375 / SS120) protein is Small ribosomal subunit protein bS21.